The sequence spans 178 residues: Cell division protein ZapC (178 aa).

This sequence belongs to the ZapC family. As to quaternary structure, interacts directly with FtsZ.

The protein localises to the cytoplasm. Its function is as follows. Contributes to the efficiency of the cell division process by stabilizing the polymeric form of the cell division protein FtsZ. Acts by promoting interactions between FtsZ protofilaments and suppressing the GTPase activity of FtsZ. In Pseudoalteromonas atlantica (strain T6c / ATCC BAA-1087), this protein is Cell division protein ZapC.